A 211-amino-acid polypeptide reads, in one-letter code: MVIMGNELQLENKILKGTTTVGIKVNDGVVLAADRRASAGFFVANKMVRKVLYITDKIGITTAGSVADLQFIYDVLKNIYHYNSITKYGPISIKGIATRLANVLSATKYFPYIVQILIGGYDDQPRLFNLDYLGDITEENYVATGSGSPVAMGVLEDEYNPKMTLDEAADLAKRAVFSAIKRDSFTGTGVIVAKIHSKGHEELEFYLNKKV.

The propeptide at 1–17 (MVIMGNELQLENKILKG) is removed in mature form; by autocatalysis. The Nucleophile role is filled by T18.

The protein belongs to the peptidase T1B family. In terms of assembly, the 20S proteasome core is composed of 14 alpha and 14 beta subunits that assemble into four stacked heptameric rings, resulting in a barrel-shaped structure. The two inner rings, each composed of seven catalytic beta subunits, are sandwiched by two outer rings, each composed of seven alpha subunits. The catalytic chamber with the active sites is on the inside of the barrel. Has a gated structure, the ends of the cylinder being occluded by the N-termini of the alpha-subunits. Is capped at one or both ends by the proteasome regulatory ATPase, PAN.

It localises to the cytoplasm. It catalyses the reaction Cleavage of peptide bonds with very broad specificity.. Its activity is regulated as follows. The formation of the proteasomal ATPase PAN-20S proteasome complex, via the docking of the C-termini of PAN into the intersubunit pockets in the alpha-rings, triggers opening of the gate for substrate entry. Interconversion between the open-gate and close-gate conformations leads to a dynamic regulation of the 20S proteasome proteolysis activity. Functionally, component of the proteasome core, a large protease complex with broad specificity involved in protein degradation. The sequence is that of Proteasome subunit beta 1 from Saccharolobus islandicus (strain M.16.27) (Sulfolobus islandicus).